The chain runs to 256 residues: Non-specific lipid transfer protein GPI-anchored 23 (256 aa).

The N-terminal stretch at 1–21 (MKPSFVLLSIVLLLSSSLSDA) is a signal peptide. Asn-41 carries an N-linked (GlcNAc...) asparagine glycan. Intrachain disulfides connect Cys-45–Cys-88, Cys-55–Cys-72, Cys-73–Cys-113, and Cys-86–Cys-121. The disordered stretch occupies residues 125–230 (TPAASTPVSP…SPSPSPSPSI (106 aa)). Residues 138–230 (SPTTSPSSAK…SPSPSPSPSI (93 aa)) are compositionally biased toward low complexity. Ser-225 carries the GPI-anchor amidated serine lipid modification. Positions 226 to 256 (PSPSISSSGILLVSKLFIAVVMVSSFLYILA) are cleaved as a propeptide — removed in mature form.

The protein belongs to the plant LTP family. In terms of tissue distribution, confined to the anthers of the inflorescence.

The protein localises to the cell membrane. Its function is as follows. Probable lipid transfer protein. The polypeptide is Non-specific lipid transfer protein GPI-anchored 23 (Arabidopsis thaliana (Mouse-ear cress)).